Reading from the N-terminus, the 205-residue chain is Outer-membrane lipoprotein carrier protein (205 aa).

The first 21 residues, 1 to 21, serve as a signal peptide directing secretion; it reads MKKIVLLVTLVFSINYSFANA.

It belongs to the LolA family. In terms of assembly, monomer.

The protein localises to the periplasm. Participates in the translocation of lipoproteins from the inner membrane to the outer membrane. Only forms a complex with a lipoprotein if the residue after the N-terminal Cys is not an aspartate (The Asp acts as a targeting signal to indicate that the lipoprotein should stay in the inner membrane). This is Outer-membrane lipoprotein carrier protein from Francisella philomiragia subsp. philomiragia (strain ATCC 25017 / CCUG 19701 / FSC 153 / O#319-036).